A 445-amino-acid chain; its full sequence is tRNA modification GTPase MnmE (445 aa).

Residues arginine 25, glutamate 83, and lysine 121 each contribute to the (6S)-5-formyl-5,6,7,8-tetrahydrofolate site. In terms of domain architecture, TrmE-type G spans 217–371; that stretch reads GVRVVILGPP…LLTLIQEKSR (155 aa). GTP contacts are provided by residues 227–232, 246–252, and 271–274; these read NAGKST, SEHPGTT, and DTAG. Residues serine 231 and threonine 252 each coordinate Mg(2+). Lysine 445 provides a ligand contact to (6S)-5-formyl-5,6,7,8-tetrahydrofolate.

This sequence belongs to the TRAFAC class TrmE-Era-EngA-EngB-Septin-like GTPase superfamily. TrmE GTPase family. As to quaternary structure, homodimer. Heterotetramer of two MnmE and two MnmG subunits. Requires K(+) as cofactor.

The protein resides in the cytoplasm. Exhibits a very high intrinsic GTPase hydrolysis rate. Involved in the addition of a carboxymethylaminomethyl (cmnm) group at the wobble position (U34) of certain tRNAs, forming tRNA-cmnm(5)s(2)U34. This chain is tRNA modification GTPase MnmE, found in Anaplasma phagocytophilum (strain HZ).